A 417-amino-acid polypeptide reads, in one-letter code: NADH-quinone oxidoreductase subunit D (417 aa).

This sequence belongs to the complex I 49 kDa subunit family. In terms of assembly, NDH-1 is composed of 14 different subunits. Subunits NuoB, C, D, E, F, and G constitute the peripheral sector of the complex.

Its subcellular location is the cell inner membrane. It catalyses the reaction a quinone + NADH + 5 H(+)(in) = a quinol + NAD(+) + 4 H(+)(out). In terms of biological role, NDH-1 shuttles electrons from NADH, via FMN and iron-sulfur (Fe-S) centers, to quinones in the respiratory chain. The immediate electron acceptor for the enzyme in this species is believed to be ubiquinone. Couples the redox reaction to proton translocation (for every two electrons transferred, four hydrogen ions are translocated across the cytoplasmic membrane), and thus conserves the redox energy in a proton gradient. The chain is NADH-quinone oxidoreductase subunit D from Francisella tularensis subsp. novicida (strain U112).